The following is a 344-amino-acid chain: S-adenosylmethionine:tRNA ribosyltransferase-isomerase (344 aa).

It belongs to the QueA family. Monomer.

The protein resides in the cytoplasm. The enzyme catalyses 7-aminomethyl-7-carbaguanosine(34) in tRNA + S-adenosyl-L-methionine = epoxyqueuosine(34) in tRNA + adenine + L-methionine + 2 H(+). The protein operates within tRNA modification; tRNA-queuosine biosynthesis. Its function is as follows. Transfers and isomerizes the ribose moiety from AdoMet to the 7-aminomethyl group of 7-deazaguanine (preQ1-tRNA) to give epoxyqueuosine (oQ-tRNA). This chain is S-adenosylmethionine:tRNA ribosyltransferase-isomerase, found in Levilactobacillus brevis (strain ATCC 367 / BCRC 12310 / CIP 105137 / JCM 1170 / LMG 11437 / NCIMB 947 / NCTC 947) (Lactobacillus brevis).